We begin with the raw amino-acid sequence, 132 residues long: Interleukin-4 (132 aa).

The signal sequence occupies residues 1–24 (MGLTSQLIPTLVCLLALTSTFVHG). N28, N45, N62, and N101 each carry an N-linked (GlcNAc...) asparagine glycan. 2 disulfides stabilise this stretch: C48-C84 and C70-C104.

It belongs to the IL-4/IL-13 family.

It is found in the secreted. In terms of biological role, participates in at least several B-cell activation processes as well as of other cell types. It is a costimulator of DNA-synthesis. It induces the expression of class II MHC molecules on resting B-cells. It enhances both secretion and cell surface expression of IgE and IgG1. It also regulates the expression of the low affinity Fc receptor for IgE (CD23) on both lymphocytes and monocytes. Positively regulates IL31RA expression in macrophages. Stimulates autophagy in dendritic cells by interfering with mTORC1 signaling and through the induction of RUFY4. This is Interleukin-4 (IL4) from Ailuropoda melanoleuca (Giant panda).